The primary structure comprises 225 residues: Uracil-DNA glycosylase (225 aa).

Residue Asp65 is the Proton acceptor of the active site.

It belongs to the uracil-DNA glycosylase (UDG) superfamily. UNG family.

The protein localises to the cytoplasm. It catalyses the reaction Hydrolyzes single-stranded DNA or mismatched double-stranded DNA and polynucleotides, releasing free uracil.. Excises uracil residues from the DNA which can arise as a result of misincorporation of dUMP residues by DNA polymerase or due to deamination of cytosine. The sequence is that of Uracil-DNA glycosylase from Bacillus thuringiensis (strain Al Hakam).